The chain runs to 287 residues: Phospholipase A and acyltransferase 5 (287 aa).

2 disordered regions span residues Pro-48–Gln-72 and Asp-86–Lys-138. 2 stretches are compositionally biased toward polar residues: residues Lys-49 to Gln-72 and Leu-128 to Lys-138. Positions Leu-144–Gln-257 constitute an LRAT domain. Active-site residues include His-154 and His-166. The active-site Acyl-thioester intermediate is Cys-241.

The protein belongs to the H-rev107 family. Expressed in testis.

Its subcellular location is the cytoplasm. The protein resides in the cytosol. The catalysed reaction is a 1,2-diacyl-sn-glycero-3-phosphocholine + H2O = a 1-acyl-sn-glycero-3-phosphocholine + a fatty acid + H(+). It carries out the reaction a 1,2-diacyl-sn-glycero-3-phosphocholine + H2O = a 2-acyl-sn-glycero-3-phosphocholine + a fatty acid + H(+). It catalyses the reaction 1-hexadecanoyl-2-(5Z,8Z,11Z,14Z-eicosatetraenoyl)-sn-glycero-3-phosphocholine + 1,2-di-(9Z-octadecenoyl)-sn-glycero-3-phosphoethanolamine = N-(5Z,8Z,11Z,14Z-eicosatetraenoyl)-1,2-di-(9Z-octadecenoyl)-sn-glycero-3-phosphoethanolamine + 1-hexadecanoyl-sn-glycero-3-phosphocholine + H(+). The enzyme catalyses 1,2-di-(9Z-octadecenoyl)-sn-glycero-3-phosphoethanolamine + 1,2-dihexadecanoyl-sn-glycero-3-phosphocholine = N-hexadecanoyl-1,2-di-(9Z-octadecenoyl)-sn-glycero-3-phosphoethanolamine + 1-hexadecanoyl-sn-glycero-3-phosphocholine + H(+). The catalysed reaction is 1,2-di-(9Z-octadecenoyl)-sn-glycero-3-phosphoethanolamine + 1,2-dihexadecanoyl-sn-glycero-3-phosphocholine = N-hexadecanoyl-1,2-di-(9Z-octadecenoyl)-sn-glycero-3-phosphoethanolamine + 2-hexadecanoyl-sn-glycero-3-phosphocholine + H(+). It carries out the reaction a 1,2-diacyl-sn-glycero-3-phosphoethanolamine + a 1,2-diacyl-sn-glycero-3-phosphocholine = an N-acyl-1,2-diacyl-sn-glycero-3-phosphoethanolamine + a 1-acyl-sn-glycero-3-phosphocholine + H(+). It catalyses the reaction a 1,2-diacyl-sn-glycero-3-phosphoethanolamine + a 1,2-diacyl-sn-glycero-3-phosphocholine = an N-acyl-1,2-diacyl-sn-glycero-3-phosphoethanolamine + a 2-acyl-sn-glycero-3-phosphocholine + H(+). The enzyme catalyses 1-hexadecanoyl-2-(9Z-octadecenoyl)-sn-glycero-3-phosphocholine + 1,2-di-(9Z-octadecenoyl)-sn-glycero-3-phosphoethanolamine = N,1,2-tri-(9Z-octadecenoyl)-sn-glycero-3-phosphoethanolamine + 1-hexadecanoyl-sn-glycero-3-phosphocholine + H(+). In terms of biological role, exhibits both phospholipase A1/2 and acyltransferase activities. Shows phospholipase A1 (PLA1) and A2 (PLA2) activity, catalyzing the calcium-independent release of fatty acids from the sn-1 or sn-2 position of glycerophospholipids. Shows N-acyltransferase activity, catalyzing the calcium-independent transfer of a fatty acyl group at the sn-1 position of phosphatidylcholine (PC) and other glycerophospholipids to the primary amine of phosphatidylethanolamine (PE), forming N-acylphosphatidylethanolamine (NAPE), which serves as precursor for N-acylethanolamines (NAEs). This Rattus norvegicus (Rat) protein is Phospholipase A and acyltransferase 5.